Here is a 456-residue protein sequence, read N- to C-terminus: Sulfoacetaldehyde dehydrogenase (456 aa).

An NAD(+)-binding site is contributed by 213–218 (GGTAAA). Active-site residues include Glu233 and Cys267.

It belongs to the aldehyde dehydrogenase family. As to quaternary structure, homotetramer.

It catalyses the reaction sulfoacetaldehyde + NAD(+) + H2O = sulfoacetate + NADH + 2 H(+). Functionally, mediates conversion of 2-sulfoacetaldehyde into sulfoacetate. The enzyme is specific for NAD; NADP is not a substrate. Part of a pathway that can utilize the amino group of taurine as a sole source of nitrogen for growth. The chain is Sulfoacetaldehyde dehydrogenase (safD) from Neptuniibacter caesariensis.